We begin with the raw amino-acid sequence, 319 residues long: Protein sprouty homolog 1 (319 aa).

Met-1 is modified (N-acetylmethionine). Disordered stretches follow at residues 54–78 (TEGPSVVKRPAPRTAPRQEKHERTH) and 100–160 (AVLP…QPKQ). Over residues 69-78 (PRQEKHERTH) the composition is skewed to basic and acidic residues. Residues 112-131 (SRSTSTGSAASSGSNSSASS) are compositionally biased toward low complexity. The 113-residue stretch at 183–295 (QCGKCKCGEC…CYDWIHRPGC (113 aa)) folds into the SPR domain.

The protein belongs to the sprouty family. Forms heterodimers with SPRY2. Interacts with TESK1. Interacts with CAV1 (via C-terminus).

The protein resides in the cytoplasm. Its subcellular location is the membrane. Its function is as follows. Inhibits fibroblast growth factor (FGF)-induced retinal lens fiber differentiation, probably by inhibiting FGF-mediated phosphorylation of ERK1/2. Inhibits TGFB-induced epithelial-to-mesenchymal transition in lens epithelial cells. The polypeptide is Protein sprouty homolog 1 (SPRY1) (Homo sapiens (Human)).